The sequence spans 172 residues: Lipoprotein signal peptidase (172 aa).

The next 3 membrane-spanning stretches (helical) occupy residues 10-30, 68-88, and 98-118; these read LIWL…KAWV, WQLW…AFWL, and SALP…DRLM. Catalysis depends on residues Asp-124 and Asp-142. The helical transmembrane segment at 138–158 threads the bilayer; the sequence is FNIADSAIVGGAIGIAVFGLF.

The protein belongs to the peptidase A8 family.

It is found in the cell inner membrane. It catalyses the reaction Release of signal peptides from bacterial membrane prolipoproteins. Hydrolyzes -Xaa-Yaa-Zaa-|-(S,diacylglyceryl)Cys-, in which Xaa is hydrophobic (preferably Leu), and Yaa (Ala or Ser) and Zaa (Gly or Ala) have small, neutral side chains.. Its pathway is protein modification; lipoprotein biosynthesis (signal peptide cleavage). This protein specifically catalyzes the removal of signal peptides from prolipoproteins. The protein is Lipoprotein signal peptidase of Xanthomonas axonopodis pv. citri (strain 306).